The primary structure comprises 323 residues: Pseudouridine-5'-phosphate glycosidase (323 aa).

Catalysis depends on glutamate 43, which acts as the Proton donor. Substrate is bound by residues lysine 104 and valine 124. Aspartate 156 contacts Mn(2+). Serine 158–aspartate 160 is a substrate binding site. Catalysis depends on lysine 177, which acts as the Nucleophile.

It belongs to the pseudouridine-5'-phosphate glycosidase family. Homotrimer. Mn(2+) is required as a cofactor.

It catalyses the reaction D-ribose 5-phosphate + uracil = psi-UMP + H2O. Its function is as follows. Catalyzes the reversible cleavage of pseudouridine 5'-phosphate (PsiMP) to ribose 5-phosphate and uracil. Functions biologically in the cleavage direction, as part of a pseudouridine degradation pathway. This Streptomyces griseus subsp. griseus (strain JCM 4626 / CBS 651.72 / NBRC 13350 / KCC S-0626 / ISP 5235) protein is Pseudouridine-5'-phosphate glycosidase.